The primary structure comprises 438 residues: Chromosomal replication initiator protein DnaA (438 aa).

The tract at residues 1-71 (MTELDSLWEA…VEIVYQRTGQ (71 aa)) is domain I, interacts with DnaA modulators. The domain II stretch occupies residues 71–101 (QEIRPDYVLATDPTPLAQTPPRPQSTFKEET). A disordered region spans residues 81–100 (TDPTPLAQTPPRPQSTFKEE). Residues 102 to 318 (PLNPEYTFQT…GALMRIRVFS (217 aa)) form a domain III, AAA+ region region. The ATP site is built by Gly146, Gly148, Lys149, and Thr150. The tract at residues 319-438 (ELHQQPITLK…LVKLKNDLQA (120 aa)) is domain IV, binds dsDNA.

Belongs to the DnaA family. In terms of assembly, oligomerizes as a right-handed, spiral filament on DNA at oriC.

The protein localises to the cytoplasm. In terms of biological role, plays an essential role in the initiation and regulation of chromosomal replication. ATP-DnaA binds to the origin of replication (oriC) to initiate formation of the DNA replication initiation complex once per cell cycle. Binds the DnaA box (a 9 base pair repeat at the origin) and separates the double-stranded (ds)DNA. Forms a right-handed helical filament on oriC DNA; dsDNA binds to the exterior of the filament while single-stranded (ss)DNA is stabiized in the filament's interior. The ATP-DnaA-oriC complex binds and stabilizes one strand of the AT-rich DNA unwinding element (DUE), permitting loading of DNA polymerase. After initiation quickly degrades to an ADP-DnaA complex that is not apt for DNA replication. Binds acidic phospholipids. The sequence is that of Chromosomal replication initiator protein DnaA from Limosilactobacillus fermentum (strain NBRC 3956 / LMG 18251) (Lactobacillus fermentum).